Consider the following 264-residue polypeptide: Signal peptidase I (264 aa).

Residues 1–18 are Cytoplasmic-facing; it reads MNRDNINSNKTVKQEFGS. The chain crosses the membrane as a helical span at residues 19 to 39; sequence FAFVICIALVIRILIMEPFTV. Over 40–264 the chain is Extracellular; the sequence is PTGSMKATIL…IFKNLYNVDE (225 aa). Active-site residues include S43 and K106.

The protein belongs to the peptidase S26 family.

Its subcellular location is the cell membrane. The enzyme catalyses Cleavage of hydrophobic, N-terminal signal or leader sequences from secreted and periplasmic proteins.. The sequence is that of Signal peptidase I (lepB) from Rickettsia prowazekii (strain Madrid E).